The primary structure comprises 329 residues: Elongation factor Ts (329 aa).

Residues 79–82 (TDFV) form an involved in Mg(2+) ion dislocation from EF-Tu region.

This sequence belongs to the EF-Ts family.

The protein resides in the cytoplasm. Associates with the EF-Tu.GDP complex and induces the exchange of GDP to GTP. It remains bound to the aminoacyl-tRNA.EF-Tu.GTP complex up to the GTP hydrolysis stage on the ribosome. This Parabacteroides distasonis (strain ATCC 8503 / DSM 20701 / CIP 104284 / JCM 5825 / NCTC 11152) protein is Elongation factor Ts.